A 199-amino-acid chain; its full sequence is Large ribosomal subunit protein bL25 (199 aa).

Belongs to the bacterial ribosomal protein bL25 family. CTC subfamily. As to quaternary structure, part of the 50S ribosomal subunit; part of the 5S rRNA/L5/L18/L25 subcomplex. Contacts the 5S rRNA. Binds to the 5S rRNA independently of L5 and L18.

This is one of the proteins that binds to the 5S RNA in the ribosome where it forms part of the central protuberance. The sequence is that of Large ribosomal subunit protein bL25 from Rickettsia akari (strain Hartford).